The sequence spans 211 residues: MDITIVNHPLVASRLTLLRDERSDNAAFRAAANDLGAMLIYEASRDLEVEHFDTKTPVAMAEGTRLKQPPIIVPIIRAGLGMIDPALSMIPDAQVGFIGLARDEETHEPVPYLEALPQDLSNQPVFLVDPMLATGGSLLHAIRLLADRGATDITAICMVSAQPGVDALAESGLPVRLVTATIDPGLDENAYIVPGLGDAGDRLYGPRNIDL.

5-phospho-alpha-D-ribose 1-diphosphate contacts are provided by residues Arg77, Arg102, and 129-137 (DPMLATGGS). Uracil contacts are provided by residues Ile192 and 197–199 (GDA). 5-phospho-alpha-D-ribose 1-diphosphate is bound at residue Asp198.

The protein belongs to the UPRTase family. The cofactor is Mg(2+).

The enzyme catalyses UMP + diphosphate = 5-phospho-alpha-D-ribose 1-diphosphate + uracil. It functions in the pathway pyrimidine metabolism; UMP biosynthesis via salvage pathway; UMP from uracil: step 1/1. With respect to regulation, allosterically activated by GTP. Functionally, catalyzes the conversion of uracil and 5-phospho-alpha-D-ribose 1-diphosphate (PRPP) to UMP and diphosphate. In Corynebacterium glutamicum (strain R), this protein is Uracil phosphoribosyltransferase.